A 206-amino-acid chain; its full sequence is Small ribosomal subunit protein uS4 (206 aa).

The 66-residue stretch at 98–163 (MRLDNVVYRL…SEKFKTFVEN (66 aa)) folds into the S4 RNA-binding domain.

It belongs to the universal ribosomal protein uS4 family. Part of the 30S ribosomal subunit. Contacts protein S5. The interaction surface between S4 and S5 is involved in control of translational fidelity.

One of the primary rRNA binding proteins, it binds directly to 16S rRNA where it nucleates assembly of the body of the 30S subunit. Functionally, with S5 and S12 plays an important role in translational accuracy. The polypeptide is Small ribosomal subunit protein uS4 (Clostridium botulinum (strain Alaska E43 / Type E3)).